The chain runs to 555 residues: Glutamine--tRNA ligase (555 aa).

The short motif at 34–44 (PEPNGYLHIGH) is the 'HIGH' region element. ATP is bound by residues 35–37 (EPN) and 41–47 (HIGHAKS). Residues Asp67 and Tyr212 each coordinate L-glutamine. Residues Thr231, 261–262 (RL), and 269–271 (MSK) contribute to the ATP site. A 'KMSKS' region motif is present at residues 268–272 (VMSKR). The tract at residues 317–324 (TKQDNTIE) is interaction with tRNA.

It belongs to the class-I aminoacyl-tRNA synthetase family. As to quaternary structure, monomer.

It localises to the cytoplasm. The enzyme catalyses tRNA(Gln) + L-glutamine + ATP = L-glutaminyl-tRNA(Gln) + AMP + diphosphate. This is Glutamine--tRNA ligase from Salmonella schwarzengrund (strain CVM19633).